Reading from the N-terminus, the 166-residue chain is Phospholipase A2 myotoxin inhibitor protein (166 aa).

An N-terminal signal peptide occupies residues 1–19 (MRLILLSGLLLLGTFLANG). Residues 46 to 161 (LKYAFLTVHK…CDDNLLVVCE (116 aa)) form the C-type lectin domain. 2 cysteine pairs are disulfide-bonded: Cys83/Cys160 and Cys138/Cys152. An N-linked (GlcNAc...) asparagine glycan is attached at Asn122.

It belongs to the alpha-type phospholipase A2 inhibitor family. In terms of assembly, oligomer. Homotrimer; non-covalently linked. Post-translationally, glycosylated. The glycosylation has no role in the association of this PLI and PA2 enzyme. In terms of tissue distribution, expressed by the liver.

It is found in the secreted. In terms of biological role, this phospholipase A2 inhibitor binds directly phospholipase A2 in the presence or absence of calcium. Has anti-enzymatic, anti-myotoxic, anti-edema inducing, anti-cytotoxic, anti-bactericidal, and anti-lethal properties against basic and acidic phospholipases A2 from Bothrops venoms. This is Phospholipase A2 myotoxin inhibitor protein from Bothrops moojeni (Lance-headed viper).